Reading from the N-terminus, the 319-residue chain is Acetyl-coenzyme A carboxylase carboxyl transferase subunit alpha (319 aa).

The region spanning 39 to 293 (KLEKKVDRMR…HEAIARQLKE (255 aa)) is the CoA carboxyltransferase C-terminal domain.

Belongs to the AccA family. Acetyl-CoA carboxylase is a heterohexamer composed of biotin carboxyl carrier protein (AccB), biotin carboxylase (AccC) and two subunits each of ACCase subunit alpha (AccA) and ACCase subunit beta (AccD).

The protein localises to the cytoplasm. It carries out the reaction N(6)-carboxybiotinyl-L-lysyl-[protein] + acetyl-CoA = N(6)-biotinyl-L-lysyl-[protein] + malonyl-CoA. Its pathway is lipid metabolism; malonyl-CoA biosynthesis; malonyl-CoA from acetyl-CoA: step 1/1. Its function is as follows. Component of the acetyl coenzyme A carboxylase (ACC) complex. First, biotin carboxylase catalyzes the carboxylation of biotin on its carrier protein (BCCP) and then the CO(2) group is transferred by the carboxyltransferase to acetyl-CoA to form malonyl-CoA. The sequence is that of Acetyl-coenzyme A carboxylase carboxyl transferase subunit alpha from Geobacter sulfurreducens (strain ATCC 51573 / DSM 12127 / PCA).